Reading from the N-terminus, the 129-residue chain is UPF0102 protein amb4503 (129 aa).

Belongs to the UPF0102 family.

This Paramagnetospirillum magneticum (strain ATCC 700264 / AMB-1) (Magnetospirillum magneticum) protein is UPF0102 protein amb4503.